Consider the following 422-residue polypeptide: Testin (422 aa).

One can recognise a PET domain in the interval M92 to E199. The disordered stretch occupies residues Q135 to H165. Positions P155–H165 are enriched in basic and acidic residues. LIM zinc-binding domains lie at Y234 to P299, R300 to V359, and S360 to S422.

This sequence belongs to the prickle / espinas / testin family. Expressed in the animal hemisphere at the 4-cell stage. By stage 18, expressed in cells adjacent to the anterior neural plate. In late neurula, expressed in the cranial neural crest. At tail bud stages, expressed strongly in the head, ventral to the developing eye, branchial arches and lateral line placodes. Also localized in the otic vesicle, dorsal fin and notochord with weaker expression at intersomitic junctions of tail bud embryos.

It localises to the cytoplasm. The protein resides in the cell cortex. The protein localises to the cell junction. It is found in the focal adhesion. Functionally, scaffold protein that may play a role in cell adhesion, cell spreading and in the reorganization of the actin cytoskeleton. May inhibit cell growth. Regulates cranial neural crest migration. Acts together with prickle1 to control axial elongation. The polypeptide is Testin (Xenopus laevis (African clawed frog)).